A 401-amino-acid chain; its full sequence is Chorismate synthase (401 aa).

Arg40 and Arg46 together coordinate NADP(+). FMN contacts are provided by residues 135 to 137 (RAS), 256 to 257 (QA), Gly300, 315 to 319 (KPIST), and Arg341.

The protein belongs to the chorismate synthase family. As to quaternary structure, homotetramer. It depends on FMNH2 as a cofactor.

The enzyme catalyses 5-O-(1-carboxyvinyl)-3-phosphoshikimate = chorismate + phosphate. Its pathway is metabolic intermediate biosynthesis; chorismate biosynthesis; chorismate from D-erythrose 4-phosphate and phosphoenolpyruvate: step 7/7. Its function is as follows. Catalyzes the anti-1,4-elimination of the C-3 phosphate and the C-6 proR hydrogen from 5-enolpyruvylshikimate-3-phosphate (EPSP) to yield chorismate, which is the branch point compound that serves as the starting substrate for the three terminal pathways of aromatic amino acid biosynthesis. This reaction introduces a second double bond into the aromatic ring system. This is Chorismate synthase from Mycobacterium avium (strain 104).